The following is a 1311-amino-acid chain: MDLFDFFRDWDLEQQCHYEQDRSALKKREWERRNQEVQQEDDLFSSGFDLFGEPYKVAEYTNKGDALANRVQNTLGNYDEMKNLLTNHSNQNHLVGIPKNSVPQNPNNKNEPSFFPEQKNRIIPPHQDNTHPSAPMPPPSVVILNSTLIHSNRKSKPEWSRDSHNPSTVLASQASGQPNKMQTLTQDQSQAKLEDFFVYPAEQPQIGEVEESNPSAKEDSNPNSSGEDAFKEIFQSNSPEESEFAVQAPGSPLVASSLLAPSSGLSVQNFPPGLYCKTSMGQQKPTAYVRPMDGQDQAPDISPTLKPSIEFENSFGNLSFGTLLDGKPSAASSKTKLPKFTILQTSEVSLPSDPSCVEEILREMTHSWPTPLTSMHTAGHSEQSTFSIPGQESQHLTPGFTLQKWNDPTTRASTKSVSFKSMLEDDLKLSSDEDDLEPVKTLTTQCTATELYQAVEKAKPRNNPVNPPLATPQPPPAVQASGGSGSSSESESSSESDSDTESSTTDSESNEAPRVATPEPEPPSTNKWQLDKWLNKVTSQNKSFICGQNETPMETISLPPPIIQPMEVQMKVKTNASQVPAEPKERPLLSLIREKARPRPTQKIPETKALKHKLSTTSETVSQRTIGKKQPKKVEKNTSTDEFTWPKPNITSSTPKEKESVELHDPPRGRNKATAHKPAPRKEPRPNIPLAPEKKKYRGPGKIVPKSREFIETDSSTSDSNTDQEETLQIKVLPPCIISGGNTAKSKEICGASLTLSTLMSSSGSNNNLSISNEEPTFSPIPVMQTEILSPLRDHENLKNLWVKIDLDLLSRVPGHSSLHAAPAKPDHKETATKPKRQTAVTAVEKPAPKGKRKHKPIEVAEKIPEKKQRLEEATTICLLPPCISPAPPHKPPNTRENNSSRRANRRKEEKLFPPPLSPLPEDPPRRRNVSGNNGPFGQDKNIAMTGQITSTKPKRTEGKFCATFKGISVNEGDTPKKASSATITVTNTAIATATVTATAIVTTTVTATATATATTTTTTTTISTITSTITTGLMDSSHLEMTSWAALPLLSSSSTNVRRPKLTFDDSVHNADYYMQEAKKLKHKADALFEKFGKAVNYADAALSFTECGNAMERDPLEAKSPYTMYSETVELLRYAMRLKNFASPLASDGDKKLAVLCYRCLSLLYLRMFKLKKDHAMKYSRSLMEYFKQNASKVAQIPSPWVSNGKNTPSPVSLNNVSPINAMGNCNNGPVTIPQRIHHMAASHVNITSNVLRGYEHWDMADKLTRENKEFFGDLDTLMGPLTQHSSMTNLVRYVRQGLCWLRIDAHLL.

3 disordered regions span residues 94–187 (LVGI…LTQD), 204–229 (PQIG…GEDA), and 377–417 (TAGH…TKSV). The span at 101–111 (SVPQNPNNKNE) shows a compositional bias: polar residues. Residues 155-164 (SKPEWSRDSH) are compositionally biased toward basic and acidic residues. Residues 165–187 (NPSTVLASQASGQPNKMQTLTQD) are compositionally biased toward polar residues. 2 stretches are compositionally biased toward polar residues: residues 377–396 (TAGH…SQHL) and 403–417 (QKWN…TKSV). Serine 430 bears the Phosphoserine mark. Disordered stretches follow at residues 457-530 (KAKP…KWQL), 574-726 (TNAS…DQEE), 818-867 (SLHA…IPEK), and 881-943 (PPCI…DKNI). The segment covering 465–477 (VNPPLATPQPPPA) has biased composition (pro residues). Low complexity predominate over residues 478–491 (VQASGGSGSSSESE). Threonine 517 is modified (phosphothreonine). The segment covering 582–597 (EPKERPLLSLIREKAR) has biased composition (basic and acidic residues). A compositionally biased stretch (polar residues) spans 615-625 (STTSETVSQRT). The span at 655–668 (PKEKESVELHDPPR) shows a compositional bias: basic and acidic residues. Residues 669-679 (GRNKATAHKPA) show a composition bias toward basic residues. Residues 857-867 (PIEVAEKIPEK) are compositionally biased toward basic and acidic residues. Pro residues-rich tracts occupy residues 883–892 (CISPAPPHKP) and 913–922 (FPPPLSPLPE).

This sequence belongs to the AF4 family. Brain (most abundant in hippocampus and amygdala), placenta and lung.

It localises to the nucleus speckle. In terms of biological role, RNA-binding protein. Might be involved in alternative splicing regulation through an interaction with G-quartet RNA structure. The chain is AF4/FMR2 family member 2 from Homo sapiens (Human).